The sequence spans 621 residues: ATP-dependent lipid A-core flippase (621 aa).

The next 5 membrane-spanning stretches (helical) occupy residues 32–52, 91–111, 192–212, 286–306, and 312–332; these read IVAALIAIFGVAATESYLAAF, VWGTENKIWTVPLFLIILVVI, IVLLYLNWQLSLIVVLMFPLL, SPFSELIASIALAVVIFIALW, and YTTIGEFMAFIVAMLQMYAPI. Residues 33 to 344 enclose the ABC transmembrane type-1 domain; sequence VAALIAIFGV…LANISIPMQT (312 aa). Residues 378–611 enclose the ABC transporter domain; sequence FRNVDVEYRS…NGYYTMLRNI (234 aa). 410-417 lines the ATP pocket; that stretch reads GRSGSGKS.

This sequence belongs to the ABC transporter superfamily. Lipid exporter (TC 3.A.1.106) family. As to quaternary structure, homodimer.

It localises to the cell inner membrane. It catalyses the reaction ATP + H2O + lipid A-core oligosaccharideSide 1 = ADP + phosphate + lipid A-core oligosaccharideSide 2.. Functionally, involved in lipopolysaccharide (LPS) biosynthesis. Translocates lipid A-core from the inner to the outer leaflet of the inner membrane. Transmembrane domains (TMD) form a pore in the inner membrane and the ATP-binding domain (NBD) is responsible for energy generation. This is ATP-dependent lipid A-core flippase from Neisseria meningitidis serogroup B (strain ATCC BAA-335 / MC58).